The chain runs to 454 residues: MRTIATYQNQSVLVLGLGKSGVNATKLLLQLGAKVTVNDGQDQEDTPAVAELRALGATVITGSHPVALFEEGFHYLFKNPGIRYDNPMVAEAIKREIPVLTEPELAYEVSEADWVSVTGSNGKTTTTTLIALMLNYQRAQGHAYAAGNIGIPLSEVAQKATAKDTMVTELSSFQLMGTTTVKPKVAVLTNIYEAHLDYHGTRENYVQAKMRIVQNQTASDYFVVNWDLPELRTLSQQTKAQVVPFSRLGTSEEGAYVKDGQLCFKGEVIMPVTDINVPGDHNVENALAALAAAKLMGQSNEAIIEVLTTFTGVKHRMQFVKEFAGRRFYNDSKATNMEATEVALKSFKQPIVLIAGGLDRGFTFEPLTDLLKAHVKAIILYGETKQLLAQTAKEAGIETIEIVDQLTEAVPAAYAASQEGDVILLSPACASWDQFKTFEERGDVYIDAVEQITE.

Residue Gly119–Thr125 coordinates ATP.

It belongs to the MurCDEF family.

Its subcellular location is the cytoplasm. It carries out the reaction UDP-N-acetyl-alpha-D-muramoyl-L-alanine + D-glutamate + ATP = UDP-N-acetyl-alpha-D-muramoyl-L-alanyl-D-glutamate + ADP + phosphate + H(+). It functions in the pathway cell wall biogenesis; peptidoglycan biosynthesis. Functionally, cell wall formation. Catalyzes the addition of glutamate to the nucleotide precursor UDP-N-acetylmuramoyl-L-alanine (UMA). The chain is UDP-N-acetylmuramoylalanine--D-glutamate ligase from Latilactobacillus sakei subsp. sakei (strain 23K) (Lactobacillus sakei subsp. sakei).